Consider the following 405-residue polypeptide: Terminal uridylyltransferase cid1 (405 aa).

UTP is bound at residue S90. The Mg(2+) site is built by D101 and D103. 8 residues coordinate UTP: A168, N171, T172, K193, K197, S211, Y212, and H336. Residues 267 to 336 enclose the PAP-associated domain; the sequence is SLGSLLHGFF…AIEDPFEISH (70 aa). R340 is a binding site for ATP. The segment at 377 to 405 is disordered; sequence APIPPRRQKKTDEQSNKKLLNETDGDNSE. A compositionally biased stretch (basic and acidic residues) spans 386-397; the sequence is KTDEQSNKKLLN.

Belongs to the DNA polymerase type-B-like family. Requires Mg(2+) as cofactor. It depends on Mn(2+) as a cofactor.

It localises to the cytoplasm. It catalyses the reaction RNA(n) + UTP = RNA(n)-3'-uridine ribonucleotide + diphosphate. The catalysed reaction is RNA(n) + ATP = RNA(n)-3'-adenine ribonucleotide + diphosphate. Its function is as follows. Cytoplasmic uridylyltransferase that mediates the terminal uridylation of mRNAs with short poly(A) tails such as such as act1, hcn1 and urg1 mRNAs, hence facilitating global mRNA decay. Uridylates the 3' ends of actin mRNAs upon S-phase arrest. Also has a weak poly(A) polymerase (PAP) activity. Residue His-336 is responsible for the specificity for UTP. Involved in cell cycle arrest where in association with crb2/rhp9 and chk1 it inhibits unscheduled mitosis. This Schizosaccharomyces pombe (strain 972 / ATCC 24843) (Fission yeast) protein is Terminal uridylyltransferase cid1.